The primary structure comprises 578 residues: SWR1 complex bromodomain subunit bdf1 (578 aa).

Residues 1–18 (MSSESRENEVKAETKDEI) show a composition bias toward basic and acidic residues. Disordered stretches follow at residues 1–89 (MSSE…PPPQ), 192–254 (DAEQ…RKNN), and 504–578 (ADSS…SESA). Residues 22–36 (GSPQLNGDNNIQSSD) show a composition bias toward polar residues. 2 stretches are compositionally biased toward basic and acidic residues: residues 37-52 (GHNDENEESLSRKRDS) and 60-77 (LKQEEKESMPKKEPEPTV). A Bromo 1 domain is found at 84 to 190 (GMPPPQQKYC…EVFERQLKQL (107 aa)). The segment covering 219–242 (NSSVSSTSASVAASTAPKAASPAV) has biased composition (low complexity). S221, S223, and S224 each carry phosphoserine. Phosphothreonine is present on T225. 2 positions are modified to phosphoserine: S226 and S239. Residues 251–360 (RKNNSQMRFC…NVFKEKWEAR (110 aa)) form the Bromo 2 domain. Residues 430–510 (RRDLTKEYGP…KPDADSSEPA (81 aa)) form the NET domain. S511 carries the post-translational modification Phosphoserine. Residues 526–537 (VLSETEQAEKIR) are compositionally biased toward basic and acidic residues. Over residues 550–563 (TSPTSPESNNAANV) the composition is skewed to polar residues. A compositionally biased stretch (acidic residues) spans 566-578 (SESDNESESSESA).

This sequence belongs to the BET family. In terms of assembly, component of the SWR1 chromatin-remodeling complex.

The protein resides in the nucleus. Functionally, component of the SWR1 complex which mediates the ATP-dependent exchange of histone H2A for the H2A variant HZT1 leading to transcriptional regulation of selected genes by chromatin remodeling. The protein is SWR1 complex bromodomain subunit bdf1 (bdf1) of Schizosaccharomyces pombe (strain 972 / ATCC 24843) (Fission yeast).